A 229-amino-acid polypeptide reads, in one-letter code: Peptidase E (229 aa).

Residues S120, D135, and H157 each act as charge relay system in the active site.

The protein belongs to the peptidase S51 family.

The protein resides in the cytoplasm. It carries out the reaction Dipeptidase E catalyzes the hydrolysis of dipeptides Asp-|-Xaa. It does not act on peptides with N-terminal Glu, Asn or Gln, nor does it cleave isoaspartyl peptides.. Functionally, hydrolyzes dipeptides containing N-terminal aspartate residues. May play a role in allowing the cell to use peptide aspartate to spare carbon otherwise required for the synthesis of the aspartate family of amino acids. In Shigella sonnei (strain Ss046), this protein is Peptidase E.